The primary structure comprises 396 residues: Elongation factor Tu-B (396 aa).

Positions 10 to 206 (KLHVNVGTIG…ALDTFIPDPT (197 aa)) constitute a tr-type G domain. Residues 19–26 (GHVDHGKT) form a G1 region. 19 to 26 (GHVDHGKT) lines the GTP pocket. Threonine 26 contacts Mg(2+). Residues 60–64 (GITIS) form a G2 region. The segment at 81–84 (DCPG) is G3. GTP is bound by residues 81–85 (DCPGH) and 136–139 (NKAD). The tract at residues 136–139 (NKAD) is G4. The interval 174 to 176 (SAR) is G5.

This sequence belongs to the TRAFAC class translation factor GTPase superfamily. Classic translation factor GTPase family. EF-Tu/EF-1A subfamily. As to quaternary structure, monomer.

Its subcellular location is the cytoplasm. The enzyme catalyses GTP + H2O = GDP + phosphate + H(+). In terms of biological role, GTP hydrolase that promotes the GTP-dependent binding of aminoacyl-tRNA to the A-site of ribosomes during protein biosynthesis. In Xanthomonas campestris pv. campestris (strain ATCC 33913 / DSM 3586 / NCPPB 528 / LMG 568 / P 25), this protein is Elongation factor Tu-B.